A 417-amino-acid polypeptide reads, in one-letter code: Phosphoglycerate kinase 1 (417 aa).

(2R)-3-phosphoglycerate-binding residues include valine 23, aspartate 24, phenylalanine 25, asparagine 26, asparagine 38, arginine 39, serine 62, histidine 63, glycine 65, arginine 66, leucine 121, arginine 122, histidine 168, and arginine 169. Residue glycine 212 participates in ADP binding. Position 212 (glycine 212) interacts with CDP. Residues alanine 213 and lysine 214 each coordinate AMP. Alanine 213 lines the ATP pocket. Residue alanine 213 participates in Mg(2+) binding. Aspartate 217 is a binding site for CDP. Residue aspartate 217 participates in Mg(2+) binding. Lysine 218 serves as a coordination point for AMP. Lysine 218 contributes to the ATP binding site. Glycine 236 serves as a coordination point for ADP. Glycine 236 serves as a coordination point for CDP. Glycine 237 and glycine 311 together coordinate AMP. Residues glycine 237 and glycine 311 each coordinate ATP. Positions 336 and 341 each coordinate CDP. Phenylalanine 341 provides a ligand contact to ADP. Glutamate 342 contributes to the AMP binding site. ATP contacts are provided by glutamate 342, aspartate 374, and threonine 375. Aspartate 374 provides a ligand contact to Mg(2+).

The protein belongs to the phosphoglycerate kinase family. As to quaternary structure, monomer. Mg(2+) is required as a cofactor.

It localises to the cytoplasm. It is found in the mitochondrion. It carries out the reaction (2R)-3-phosphoglycerate + ATP = (2R)-3-phospho-glyceroyl phosphate + ADP. It functions in the pathway carbohydrate degradation; glycolysis; pyruvate from D-glyceraldehyde 3-phosphate: step 2/5. In terms of biological role, catalyzes one of the two ATP producing reactions in the glycolytic pathway via the reversible conversion of 1,3-diphosphoglycerate to 3-phosphoglycerate. Both L- and D- forms of purine and pyrimidine nucleotides can be used as substrates, but the activity is much lower on pyrimidines. Negatively regulates the biosynthesis of acetyl-CoA from pyruvate in the mitochondrion. The polypeptide is Phosphoglycerate kinase 1 (PGK1) (Rhizopus niveus).